The following is a 249-amino-acid chain: Kallikrein-7 (249 aa).

A signal peptide spans 1-21; sequence MGVWLLSLITVLLSLALETAG. Positions 22 to 25 are cleaved as a propeptide — activation peptide; the sequence is QGER. The interval 26–246 is serine protease; that stretch reads IIDGYKCKEG…YKRWVMETMK (221 aa). 6 disulfide bridges follow: C32-C161, C51-C67, C133-C235, C140-C207, C172-C186, and C197-C222. Active-site charge relay system residues include H66 and D108. Catalysis depends on S201, which acts as the Charge relay system.

This sequence belongs to the peptidase S1 family. Kallikrein subfamily. In terms of tissue distribution, expressed in skin and, at lower levels, in lung, kidney, brain, heart and spleen. In skin, expressed in high suprabasal keratinocytes and in the luminal parts of hair follicles. Not detected in liver and skeletal muscle.

The protein resides in the secreted. The catalysed reaction is Cleavage of proteins with aromatic side chains in the P1 position.. With respect to regulation, inhibited by Zn2+ and Cu2+ at low micromolar concentrations. Inhibited by SERPINA12. May catalyze the degradation of intercellular cohesive structures in the cornified layer of the skin in the continuous shedding of cells from the skin surface. Specific for amino acid residues with aromatic side chains in the P1 position. Cleaves insulin A chain at '14-Tyr-|-Gln-15' and insulin B chain at '6-Leu-|-Cys-7', '16-Tyr-|-Leu-17', '25-Phe-|-Tyr-26' and '26-Tyr-|-Thr-27'. Could play a role in the activation of precursors to inflammatory cytokines. This Mus musculus (Mouse) protein is Kallikrein-7 (Klk7).